Here is a 129-residue protein sequence, read N- to C-terminus: Thioredoxin-like 3-3 (129 aa).

Residues 1–10 show a composition bias toward basic and acidic residues; the sequence is MEEGEAKKTG. Positions 1–30 are disordered; the sequence is MEEGEAKKTGLEGTGLSLPGSSHGNLRSAG. The Thioredoxin domain maps to 7–129; sequence KKTGLEGTGL…RLHDRLWLHS (123 aa). Positions 19-30 are enriched in polar residues; that stretch reads PGSSHGNLRSAG. Catalysis depends on nucleophile residues Cys58 and Cys61. Cys58 and Cys61 are joined by a disulfide.

This sequence belongs to the thioredoxin family.

Its function is as follows. Probable thiol-disulfide oxidoreductase that may participate in various redox reactions. The protein is Thioredoxin-like 3-3 of Oryza sativa subsp. japonica (Rice).